The following is a 312-amino-acid chain: Malate dehydrogenase (312 aa).

NAD(+) contacts are provided by residues 7–13 and Asp34; that span reads GAAGGIG. Residues Arg81 and Arg87 each coordinate substrate. Residues Asn94 and 117 to 119 each bind NAD(+); that span reads ITN. Positions 119 and 153 each coordinate substrate. His177 acts as the Proton acceptor in catalysis. Residue Met227 coordinates NAD(+).

The protein belongs to the LDH/MDH superfamily. MDH type 1 family. Homodimer.

The enzyme catalyses (S)-malate + NAD(+) = oxaloacetate + NADH + H(+). Its function is as follows. Catalyzes the reversible oxidation of malate to oxaloacetate. The chain is Malate dehydrogenase from Photorhabdus laumondii subsp. laumondii (strain DSM 15139 / CIP 105565 / TT01) (Photorhabdus luminescens subsp. laumondii).